Here is a 264-residue protein sequence, read N- to C-terminus: Thymidylate synthase (264 aa).

Position 21 (arginine 21) interacts with dUMP. Histidine 51 is a binding site for (6R)-5,10-methylene-5,6,7,8-tetrahydrofolate. A dUMP-binding site is contributed by 126–127 (RR). The active-site Nucleophile is the cysteine 146. DUMP contacts are provided by residues 166–169 (RSCD), asparagine 177, and 207–209 (HLY). Aspartate 169 provides a ligand contact to (6R)-5,10-methylene-5,6,7,8-tetrahydrofolate. Alanine 263 provides a ligand contact to (6R)-5,10-methylene-5,6,7,8-tetrahydrofolate.

It belongs to the thymidylate synthase family. Bacterial-type ThyA subfamily. As to quaternary structure, homodimer.

The protein localises to the cytoplasm. The enzyme catalyses dUMP + (6R)-5,10-methylene-5,6,7,8-tetrahydrofolate = 7,8-dihydrofolate + dTMP. Its pathway is pyrimidine metabolism; dTTP biosynthesis. Catalyzes the reductive methylation of 2'-deoxyuridine-5'-monophosphate (dUMP) to 2'-deoxythymidine-5'-monophosphate (dTMP) while utilizing 5,10-methylenetetrahydrofolate (mTHF) as the methyl donor and reductant in the reaction, yielding dihydrofolate (DHF) as a by-product. This enzymatic reaction provides an intracellular de novo source of dTMP, an essential precursor for DNA biosynthesis. In Shewanella putrefaciens (strain CN-32 / ATCC BAA-453), this protein is Thymidylate synthase.